Here is a 115-residue protein sequence, read N- to C-terminus: Large ribosomal subunit protein bL20 (115 aa).

The protein belongs to the bacterial ribosomal protein bL20 family.

Functionally, binds directly to 23S ribosomal RNA and is necessary for the in vitro assembly process of the 50S ribosomal subunit. It is not involved in the protein synthesizing functions of that subunit. In Chlorobium phaeobacteroides (strain DSM 266 / SMG 266 / 2430), this protein is Large ribosomal subunit protein bL20.